Here is a 250-residue protein sequence, read N- to C-terminus: Intermembrane phospholipid transport system lipoprotein MlaA (250 aa).

An N-terminal signal peptide occupies residues 1 to 18 (MKTKTILTALLSAIALTG). Cys19 carries N-palmitoyl cysteine lipidation. Cys19 carries the S-diacylglycerol cysteine lipid modification.

Belongs to the MlaA family.

Its subcellular location is the cell outer membrane. In terms of biological role, involved in a phospholipid transport pathway that maintains lipid asymmetry in the outer membrane by retrograde trafficking of phospholipids from the outer membrane to the inner membrane. This Haemophilus influenzae (strain ATCC 51907 / DSM 11121 / KW20 / Rd) protein is Intermembrane phospholipid transport system lipoprotein MlaA.